The primary structure comprises 58 residues: Large ribosomal subunit protein bL32 (58 aa).

This sequence belongs to the bacterial ribosomal protein bL32 family.

The chain is Large ribosomal subunit protein bL32 from Caldicellulosiruptor bescii (strain ATCC BAA-1888 / DSM 6725 / KCTC 15123 / Z-1320) (Anaerocellum thermophilum).